Consider the following 262-residue polypeptide: CD99 antigen-like protein 2 (262 aa).

An N-terminal signal peptide occupies residues 1 to 25 (MVAWRSAFLVCLAFSLATLVQRGSG). The Extracellular portion of the chain corresponds to 26 to 185 (DFDDFNLEDA…PGSGMVAEPG (160 aa)). The interval 38–181 (ETSSVKQPWD…SNDDPGSGMV (144 aa)) is disordered. Composition is skewed to low complexity over residues 49–60 (TTTTTTNRPGTT) and 98–119 (VTTT…GNDF). Basic and acidic residues-rich tracts occupy residues 125-136 (LDDRNDRDDGRR) and 159-168 (YKPDKGKGDG). Residue Ser178 is glycosylated (O-linked (Xyl...) (chondroitin sulfate) serine). Residues 186-206 (TIAGVASALAMALIGAVSSYI) form a helical membrane-spanning segment. Residues 207-262 (SYQQKKFCFSIQQGLNADYVKGENLEAVVCEEPQVKYSTLHTQSAEPPPPPEPARI) lie on the Cytoplasmic side of the membrane.

It belongs to the CD99 family. Post-translationally, O-glycosylated. As to expression, detected in cerebrospinal fluid (at protein level). Expressed in many tissues, with low expression in thymus.

The protein resides in the cell membrane. It is found in the cell junction. The protein localises to the secreted. Its function is as follows. Plays a role in a late step of leukocyte extravasation helping cells to overcome the endothelial basement membrane. Acts at the same site as, but independently of, PECAM1. Homophilic adhesion molecule, but these interactions may not be required for cell aggregation. This chain is CD99 antigen-like protein 2 (CD99L2), found in Homo sapiens (Human).